Reading from the N-terminus, the 137-residue chain is Cellular retinoic acid-binding protein 1 (137 aa).

Residues 21 to 31 (KALGVNAMLRK) carry the Nuclear localization signal motif. 132 to 134 (RIY) is an all-trans-retinoate binding site.

Belongs to the calycin superfamily. Fatty-acid binding protein (FABP) family.

It localises to the cytoplasm. Cytosolic CRABPs may regulate the access of retinoic acid to the nuclear retinoic acid receptors. The sequence is that of Cellular retinoic acid-binding protein 1 (CRABP1) from Homo sapiens (Human).